The following is a 229-amino-acid chain: Potassium/proton antiporter CemA (229 aa).

3 helical membrane passes run 7–27 (LTPL…SISF), 106–126 (IILH…YSIL), and 189–209 (IISG…KYWI).

It belongs to the CemA family.

It is found in the plastid. The protein localises to the chloroplast inner membrane. It catalyses the reaction K(+)(in) + H(+)(out) = K(+)(out) + H(+)(in). In terms of biological role, contributes to K(+)/H(+) antiport activity by supporting proton efflux to control proton extrusion and homeostasis in chloroplasts in a light-dependent manner to modulate photosynthesis. Prevents excessive induction of non-photochemical quenching (NPQ) under continuous-light conditions. Indirectly promotes efficient inorganic carbon uptake into chloroplasts. This chain is Potassium/proton antiporter CemA, found in Liriodendron tulipifera (Tuliptree).